The sequence spans 115 residues: Large ribosomal subunit protein uL24 (115 aa).

It belongs to the universal ribosomal protein uL24 family. As to quaternary structure, part of the 50S ribosomal subunit.

Its function is as follows. One of two assembly initiator proteins, it binds directly to the 5'-end of the 23S rRNA, where it nucleates assembly of the 50S subunit. One of the proteins that surrounds the polypeptide exit tunnel on the outside of the subunit. The sequence is that of Large ribosomal subunit protein uL24 from Acaryochloris marina (strain MBIC 11017).